The primary structure comprises 449 residues: Allantoinase (449 aa).

His59, His61, Lys146, His182, His238, and Asp311 together coordinate Zn(2+). At Lys146 the chain carries N6-carboxylysine.

This sequence belongs to the metallo-dependent hydrolases superfamily. Allantoinase family. In terms of assembly, homotetramer. It depends on Zn(2+) as a cofactor. Carboxylation allows a single lysine to coordinate two zinc ions.

The enzyme catalyses (S)-allantoin + H2O = allantoate + H(+). It functions in the pathway nitrogen metabolism; (S)-allantoin degradation; allantoate from (S)-allantoin: step 1/1. Functionally, catalyzes the conversion of allantoin (5-ureidohydantoin) to allantoic acid by hydrolytic cleavage of the five-member hydantoin ring. The chain is Allantoinase from Deinococcus geothermalis (strain DSM 11300 / CIP 105573 / AG-3a).